Consider the following 555-residue polypeptide: Dihydroxy-acid dehydratase (555 aa).

Residue Asp78 coordinates Mg(2+). Cys119 contacts [2Fe-2S] cluster. Mg(2+)-binding residues include Asp120 and Lys121. N6-carboxylysine is present on Lys121. Cys195 contacts [2Fe-2S] cluster. Glu444 is a Mg(2+) binding site. Residue Ser470 is the Proton acceptor of the active site.

The protein belongs to the IlvD/Edd family. Homodimer. The cofactor is [2Fe-2S] cluster. Requires Mg(2+) as cofactor.

The enzyme catalyses (2R)-2,3-dihydroxy-3-methylbutanoate = 3-methyl-2-oxobutanoate + H2O. It carries out the reaction (2R,3R)-2,3-dihydroxy-3-methylpentanoate = (S)-3-methyl-2-oxopentanoate + H2O. Its pathway is amino-acid biosynthesis; L-isoleucine biosynthesis; L-isoleucine from 2-oxobutanoate: step 3/4. It functions in the pathway amino-acid biosynthesis; L-valine biosynthesis; L-valine from pyruvate: step 3/4. Functionally, functions in the biosynthesis of branched-chain amino acids. Catalyzes the dehydration of (2R,3R)-2,3-dihydroxy-3-methylpentanoate (2,3-dihydroxy-3-methylvalerate) into 2-oxo-3-methylpentanoate (2-oxo-3-methylvalerate) and of (2R)-2,3-dihydroxy-3-methylbutanoate (2,3-dihydroxyisovalerate) into 2-oxo-3-methylbutanoate (2-oxoisovalerate), the penultimate precursor to L-isoleucine and L-valine, respectively. This is Dihydroxy-acid dehydratase from Dehalococcoides mccartyi (strain CBDB1).